Consider the following 210-residue polypeptide: Secreted isochorismatase effector Isc1 (210 aa).

Catalysis depends on residues Asp25, Lys90, and Cys124.

This sequence belongs to the isochorismatase family.

The protein resides in the secreted. The protein localises to the host cytoplasm. Its subcellular location is the host nucleus. The enzyme catalyses isochorismate + H2O = (2S,3S)-2,3-dihydroxy-2,3-dihydrobenzoate + pyruvate. Secreted isochorismatase required for full virulence of P.sojae. Suppresses salicylate-mediated innate immunity of the host by disrupting the plant salicylate metabolism pathway via hydrolysis of its isochorismate precursor. The sequence is that of Secreted isochorismatase effector Isc1 from Phytophthora sojae (strain P6497) (Soybean stem and root rot agent).